A 359-amino-acid polypeptide reads, in one-letter code: ATP-dependent 6-phosphofructokinase 1 (359 aa).

ATP contacts are provided by residues G14, 78–79, and 115–118; these read KG and GDGS. D116 provides a ligand contact to Mg(2+). Substrate-binding positions include 139-141, R176, 183-185, E236, R277, and 283-286; these read TID, MGR, and HIQR. The Proton acceptor role is filled by D141.

The protein belongs to the phosphofructokinase type A (PFKA) family. Mixed-substrate PFK group III subfamily. In terms of assembly, homodimer or homotetramer. Mg(2+) is required as a cofactor.

Its subcellular location is the cytoplasm. It catalyses the reaction beta-D-fructose 6-phosphate + ATP = beta-D-fructose 1,6-bisphosphate + ADP + H(+). It functions in the pathway carbohydrate degradation; glycolysis; D-glyceraldehyde 3-phosphate and glycerone phosphate from D-glucose: step 3/4. Catalyzes the phosphorylation of D-fructose 6-phosphate to fructose 1,6-bisphosphate by ATP, the first committing step of glycolysis. In Nostoc sp. (strain PCC 7120 / SAG 25.82 / UTEX 2576), this protein is ATP-dependent 6-phosphofructokinase 1.